We begin with the raw amino-acid sequence, 143 residues long: Small ribosomal subunit protein uS12 (143 aa).

A compositionally biased stretch (basic residues) spans M1–A19. A disordered region spans residues M1–R21. P62 bears the Hydroxyproline mark.

Belongs to the universal ribosomal protein uS12 family. In terms of assembly, component of the 40S small ribosomal subunit.

It is found in the cytoplasm. It localises to the cytosol. Its subcellular location is the rough endoplasmic reticulum. This Brugia malayi (Filarial nematode worm) protein is Small ribosomal subunit protein uS12 (rps-23).